The sequence spans 507 residues: MLRVPLLVLCLALSVGADYYGYGWGRNGGGGGSGGGSGSSRASASASASARANSIGNLVGRLTSLVDASASARASASANAGGFGGSGAGGSGGNGFGGGSGGSGFGGGSGGSGFGGGSGGSGFGGGSGGSGFGGGSGGSGFGGGSGGSGFGGASASASAQALASATAELQAAQDAYDQASAYAEATARAAANGGSLDSSALASAIASAEASVSARGASIIARARARAEATVRAARRSFASAQASAEASVSAVRSAEGRARSFARAVARARASARAAIAGVRSSGRAFASATARARASVSAAARAVARARAQAVARARASIRASASASARASASAAAEARAAAYARVQVAAAAAARAAASAASASASASASGSSFGSGGSGGSGNGGFGSFGASANAVANAFAQAFGGGLGNGGNGGNGNGGNGGNGGNGNGGNGGNGNGGNGGNGNGGNGGNGGNGNGGNGGNGNGGNGRNGNGGNGRNGNGGNGGNGNGRNGRGGRYYYGSSDYYY.

An N-terminal signal peptide occupies residues 1–17; sequence MLRVPLLVLCLALSVGA. Residues 158–185 adopt a coiled-coil conformation; sequence SAQALASATAELQAAQDAYDQASAYAEA. Gly residues predominate over residues 462-498; sequence GNGNGGNGRNGNGGNGRNGNGGNGGNGNGRNGRGGRY. The tract at residues 462–507 is disordered; sequence GNGNGGNGRNGNGGNGRNGNGGNGGNGNGRNGRGGRYYYGSSDYYY.

In terms of tissue distribution, component of the acid-soluble and acid-insoluble organic matrix of calcified shell layers (at protein level).

It localises to the secreted. The sequence is that of Glycine, alanine and asparagine-rich protein from Haliotis asinina (Donkey's ear abalone).